Consider the following 121-residue polypeptide: Large ribosomal subunit protein bL19 (121 aa).

This sequence belongs to the bacterial ribosomal protein bL19 family.

This protein is located at the 30S-50S ribosomal subunit interface and may play a role in the structure and function of the aminoacyl-tRNA binding site. This Chlorobaculum tepidum (strain ATCC 49652 / DSM 12025 / NBRC 103806 / TLS) (Chlorobium tepidum) protein is Large ribosomal subunit protein bL19.